A 174-amino-acid polypeptide reads, in one-letter code: Protein CURVATURE THYLAKOID 1B, chloroplastic (174 aa).

A disordered region spans residues methionine 1–serine 20. A chloroplast-targeting transit peptide spans methionine 1–arginine 63. Alanine 64 carries the N-acetylalanine modification. Over alanine 64 to lysine 100 the chain is Stromal. Residues tyrosine 101–isoleucine 121 form a helical membrane-spanning segment. The Lumenal portion of the chain corresponds to serine 122 to arginine 126. Residues leucine 127–tyrosine 147 form a helical membrane-spanning segment. Topologically, residues lysine 148 to serine 174 are stromal.

The protein belongs to the CURT family. As to quaternary structure, homo- and heterodimers and trimers. Interacts with PSAL. Phosphorylated on either Thr-65 or Thr-66 by a threonine specific thylakoid kinase.

The protein localises to the plastid. It localises to the chloroplast thylakoid membrane. Functionally, determines thylakoid architecture by inducing membrane curvature. In Arabidopsis thaliana (Mouse-ear cress), this protein is Protein CURVATURE THYLAKOID 1B, chloroplastic (CURT1B).